A 231-amino-acid chain; its full sequence is Chromosome partition protein MukE (231 aa).

The tract at residues 211 to 231 is disordered; the sequence is SLLADEEEQDYNEQAELEGEA. Positions 214–231 are enriched in acidic residues; it reads ADEEEQDYNEQAELEGEA.

The protein belongs to the MukE family. Interacts, and probably forms a ternary complex, with MukF and MukB. The complex formation is stimulated by calcium or magnesium.

The protein resides in the cytoplasm. It localises to the nucleoid. In terms of biological role, involved in chromosome condensation, segregation and cell cycle progression. May participate in facilitating chromosome segregation by condensation DNA from both sides of a centrally located replisome during cell division. Probably acts via its interaction with MukB and MukF. The protein is Chromosome partition protein MukE of Vibrio vulnificus (strain CMCP6).